A 343-amino-acid chain; its full sequence is Flavone 3'-O-methyltransferase OMT1 (343 aa).

Asn107 contributes to the (E)-ferulate binding site. S-adenosyl-L-homocysteine-binding residues include Gly184, Asp207, Asp227, Met228, Met240, and Lys241. His245 acts as the Proton acceptor in catalysis. Asp246 is a binding site for (E)-5-hydroxyferulate. Catalysis depends on residues Glu273 and Glu305.

Belongs to the class I-like SAM-binding methyltransferase superfamily. Cation-independent O-methyltransferase family. COMT subfamily. Homodimer.

The catalysed reaction is (E)-5-hydroxyferulate + S-adenosyl-L-methionine = (E)-sinapate + S-adenosyl-L-homocysteine + H(+). It carries out the reaction luteolin + S-adenosyl-L-methionine = chrysoeriol + S-adenosyl-L-homocysteine + H(+). It catalyses the reaction quercetin + S-adenosyl-L-methionine = isorhamnetin + S-adenosyl-L-homocysteine + H(+). The enzyme catalyses (E)-caffeate + S-adenosyl-L-methionine = (E)-ferulate + S-adenosyl-L-homocysteine + H(+). The catalysed reaction is a 3'-hydroxyflavone + S-adenosyl-L-methionine = a 3'-methoxyflavone + S-adenosyl-L-homocysteine + H(+). Its pathway is flavonoid metabolism. In terms of biological role, catalyzes the 3'-O-methylation of the flavonoids luteolin and quercetin. Catalyzes the 3- of 5-O-methylation of the phenylpropanoids caffeate and 5-hydroxyferulate. Substrate preference is 5-hydroxyferulate &gt; luteolin &gt; quercetin &gt; caffeate. Apigenin, kempferol and 3,4-dimethylquercetin do not seem to be substrates for methylation. The protein is Flavone 3'-O-methyltransferase OMT1 of Chrysosplenium americanum (American golden saxifrage).